A 211-amino-acid chain; its full sequence is MTEIQKLTNNKEIIAYLAEKFPLCFSLEGEAKPLKIGLFQDLAEALANDEKVSKTQLRQALRQYTSNWRYLHGCRAGAVRVDLNGEPAGILEQEHVEHAAAKLAEAKAKVAERRAVEKANNPKANKKRSVYHSGNKSENKKSAGKKFSKPRQVEQIFVNVDLANLQKGDVVRVKAGDKTTKAEILEVVKEGARVELENGLILTVSADRLFA.

A disordered region spans residues 113–147 (RRAVEKANNPKANKKRSVYHSGNKSENKKSAGKKF).

The protein belongs to the ProQ family.

It localises to the cytoplasm. Functionally, RNA chaperone with significant RNA binding, RNA strand exchange and RNA duplexing activities. The polypeptide is RNA chaperone ProQ (Histophilus somni (strain 129Pt) (Haemophilus somnus)).